A 678-amino-acid polypeptide reads, in one-letter code: Protein CASP (678 aa).

Residues 1–619 (MAANVGSMFQ…LVLSNKMART (619 aa)) lie on the Cytoplasmic side of the membrane. 2 coiled-coil regions span residues 67–450 (LLKS…QDLS) and 502–556 (LSII…FLQS). S586 carries the post-translational modification Phosphoserine. Residues 620–640 (IGFFYTLFLHCLVFLVLYKLA) traverse the membrane as a helical; Anchor for type IV membrane protein segment. Over 641–678 (WSESMERDCATFCAKKFADHLHKFHENDNGAAAGDLWQ) the chain is Lumenal.

The protein belongs to the CASP family. In terms of assembly, homodimer; disulfide-linked. Interacts with GOLGA5.

The protein localises to the golgi apparatus membrane. Functionally, may be involved in intra-Golgi retrograde transport. This is Protein CASP (CUTL1) from Pongo abelii (Sumatran orangutan).